The chain runs to 345 residues: IGF-like family receptor 1 (345 aa).

An N-terminal signal peptide occupies residues 1–20; the sequence is MGPSWLLWTVAVAVLLLTRA. Topologically, residues 21–163 are extracellular; sequence ASMEASSFCG…SSRPGFVSAS (143 aa). An N-linked (GlcNAc...) asparagine glycan is attached at Asn87. The interval 106 to 149 is disordered; it reads VESPGRTHKQCRKKPVPPKDVCPLKPEDAGASSSPGRWSLGQTT. Over residues 111–121 the composition is skewed to basic residues; that stretch reads RTHKQCRKKPV. Polar residues predominate over residues 136-149; it reads ASSSPGRWSLGQTT. Residues 164-184 traverse the membrane as a helical segment; that stretch reads VLPLAVLPLLLVLLLILAVVL. Topologically, residues 185–345 are cytoplasmic; sequence LSLFKRKVRS…DALQVLSKLG (161 aa).

Ubiquitously expressed with higher expression in lymph node. Highly expressed in T-cells and monocytes.

Its subcellular location is the cell membrane. Its function is as follows. Probable cell membrane receptor for the IGF-like family protein IGFL. This is IGF-like family receptor 1 (Igflr1) from Mus musculus (Mouse).